The primary structure comprises 215 residues: MKQLDYLRTVPRSGTGAPSVYLTFDDGPNPVFTPEVLDVLAEHRVPATFFVIGAYAKDRPQLIRRMVAQGHEVANHTMTHPDLSACGRRDVERQVLEANRAIRMACPEASVRHIRAPYGIWSDDVLTTSANAGLAAVHWSVDPRDWSRPGIDAIVDAVLASVRPGSIILLHDGCPPDELANTDASFRDQTVAALSRLIPALHDRGFIIRSLPQNH.

A NodB homology domain is found at 18–209 (PSVYLTFDDG…ALHDRGFIIR (192 aa)). Catalysis depends on D25, which acts as the Proton acceptor. Positions 76 and 80 each coordinate a divalent metal cation. H171 acts as the Proton donor in catalysis.

It belongs to the polysaccharide deacetylase family.

Its subcellular location is the cytoplasm. Functionally, is involved in generating a small heat-stable compound (Nod), an acylated oligomer of N-acetylglucosamine, that stimulates mitosis in various plant protoplasts. The protein is Chitooligosaccharide deacetylase (nodB) of Sinorhizobium fredii (strain NBRC 101917 / NGR234).